The following is a 350-amino-acid chain: Neurogenic differentiation factor 1 (350 aa).

The disordered stretch occupies residues 1-91 (MTKSYSEESM…KKKKMTKARM (91 aa)). Positions 7 to 18 (EESMMLESQSSS) are enriched in low complexity. Residues 22 to 38 (DKCHSSSQDERDVDKTS) show a composition bias toward basic and acidic residues. Residues 44-72 (DMEDDDDAGLNRLEDEDDEEEEEEEEDGD) are compositionally biased toward acidic residues. Positions 76–91 (PKRRGPKKKKMTKARM) are enriched in basic residues. A Nuclear localization signal motif is present at residues 82–88 (KKKKMTK). In terms of domain architecture, bHLH spans 96 to 148 (MRRMKANARERNRMHGLNDALESLRKVVPCYSKTQKLSKIETLRLAKNYIWAL).

Efficient DNA binding requires dimerization with another bHLH protein. In terms of tissue distribution, in the embryo, expressed broadly in a subset of primary neurons in the brain and spinal cord. At 28 hours post-fertilization (hpf), regions of expression include telencephalon, olfactory placode, epiphysis, cranial ganglia, acoustic ganglia, Rohon-Beard mechano-sensory neurons and motoneurons. In 2 day postembryonic brain, expressed in many brain regions but absent from subpallium, the ventral preoptic region, ventral thalamus and hypothalamus; sites of expression extend laterally from the ventricular proliferative regions and correspond to freshly determined cell populations. In adult, expressed in all tissues examined with highest levels in brain.

It is found in the cytoplasm. The protein resides in the nucleus. In terms of biological role, may act as a transcriptional activator. Differentiation factor required for neurogenesis. Acts as an upstream activator of isl1. In Danio rerio (Zebrafish), this protein is Neurogenic differentiation factor 1.